A 152-amino-acid polypeptide reads, in one-letter code: MGLSTLEQKLTAMVSAPVEALGFEFVGLEFIRGRVSTLRIYIDSEEGITVDDCADVSHQVSAVLDVEDPIQTFYNLEISSPGLERPLFTTTHYEQFIGEEVAVVLRIAMQNRRKWQGIIKSVAGEMITVTVDGKDEVFALSNIQKANLVPHF.

Belongs to the RimP family.

The protein resides in the cytoplasm. Its function is as follows. Required for maturation of 30S ribosomal subunits. The protein is Ribosome maturation factor RimP of Proteus mirabilis (strain HI4320).